Reading from the N-terminus, the 772-residue chain is Rho guanine nucleotide exchange factor 6 (772 aa).

In terms of domain architecture, Calponin-homology (CH) spans M1–E111. The interval S115–N158 is disordered. A compositionally biased stretch (low complexity) spans S122–T133. S126 is subject to Phosphoserine. T133 carries the post-translational modification Phosphothreonine. Positions N134–Q146 are enriched in polar residues. One can recognise an SH3 domain in the interval S160–P219. S225 is subject to Phosphoserine. Residues Y241–L421 enclose the DH domain. The region spanning D443–K548 is the PH domain. At S488 the chain carries Phosphoserine. Over residues S557–T573 the composition is skewed to low complexity. The disordered stretch occupies residues S557–E581. Phosphoserine occurs at positions 640 and 680.

As to quaternary structure, interacts with PAK kinases through the SH3 domain. Interacts with GIT1. Interacts with PARVB. Component of cytoplasmic complexes, which also contain PXN, GIT1 and PAK1. Interacts with BIN2. Identified in a complex with BIN2 and GIT2. Interacts with PARVG; the guanine nucleotide exchange factor activity of ARHGEF6 is essential for PARVG-induced enhancement of cell spreading.

The protein resides in the cell projection. It is found in the lamellipodium. In terms of biological role, acts as a RAC1 guanine nucleotide exchange factor (GEF). In Rattus norvegicus (Rat), this protein is Rho guanine nucleotide exchange factor 6 (Arhgef6).